The primary structure comprises 384 residues: Homoserine O-succinyltransferase (384 aa).

In terms of domain architecture, AB hydrolase-1 spans 51–361; it reads NAILICHALS…ETSQGHDAFL (311 aa). Catalysis depends on serine 157, which acts as the Nucleophile. Residue arginine 227 participates in substrate binding. Residues aspartate 324 and histidine 357 contribute to the active site. Aspartate 358 contacts substrate.

This sequence belongs to the AB hydrolase superfamily. MetX family. As to quaternary structure, homodimer.

The protein localises to the cytoplasm. It catalyses the reaction L-homoserine + succinyl-CoA = O-succinyl-L-homoserine + CoA. The protein operates within amino-acid biosynthesis; L-methionine biosynthesis via de novo pathway; O-succinyl-L-homoserine from L-homoserine: step 1/1. Functionally, transfers a succinyl group from succinyl-CoA to L-homoserine, forming succinyl-L-homoserine. This Alkalilimnicola ehrlichii (strain ATCC BAA-1101 / DSM 17681 / MLHE-1) protein is Homoserine O-succinyltransferase.